Consider the following 309-residue polypeptide: DnaJ protein ERDJ7 (309 aa).

A signal peptide spans M1–A36. The Lumenal portion of the chain corresponds to I37 to D130. In terms of domain architecture, J spans D43 to I107. N55 carries N-linked (GlcNAc...) asparagine glycosylation. The helical transmembrane segment at P131–F151 threads the bilayer. Over G152 to L219 the chain is Cytoplasmic. The chain crosses the membrane as a helical span at residues Y220–F242. Topologically, residues W243 to R309 are lumenal.

Its subcellular location is the endoplasmic reticulum membrane. In terms of biological role, may play a role in protein folding in the endoplasmic reticulum. The protein is DnaJ protein ERDJ7 of Oryza sativa subsp. japonica (Rice).